A 163-amino-acid chain; its full sequence is Nucleotide-binding protein CYA_0935 (163 aa).

This sequence belongs to the YajQ family.

Its function is as follows. Nucleotide-binding protein. The sequence is that of Nucleotide-binding protein CYA_0935 from Synechococcus sp. (strain JA-3-3Ab) (Cyanobacteria bacterium Yellowstone A-Prime).